Consider the following 186-residue polypeptide: uncharacterized protein (186 aa).

The first 21 residues, 1-21, serve as a signal peptide directing secretion; it reads MKFFLGSALFLILTFINLVRA. Residues 22–142 are Extracellular-facing; sequence EFEFITPAED…AFSVNPIDKK (121 aa). Asparagine 62, asparagine 75, asparagine 93, and asparagine 104 each carry an N-linked (GlcNAc...) asparagine glycan. Residues 143–163 form a helical membrane-spanning segment; sequence LAIGLSVGLSCCILIVLFLHF. Residues 164–186 lie on the Cytoplasmic side of the membrane; the sequence is ATRRERRILKNEKELEMSSYRKH.

Its subcellular location is the membrane. This is an uncharacterized protein from Schizosaccharomyces pombe (strain 972 / ATCC 24843) (Fission yeast).